The chain runs to 818 residues: IQ and AAA domain-containing protein 1-like (818 aa).

An IQ domain is found at 206–235; that stretch reads QGQAAVTIQKVWKGYLQRKRTQQDRRMEME. Disordered stretches follow at residues 344-377 and 458-482; these read QMQE…AKKG and EERP…KDLT. Residues 463 to 476 are compositionally biased toward basic residues; it reads RAPKKTPGKKTGKK. Position 567-574 (567-574) interacts with ATP; sequence GPSGMGKK. The interval 795 to 818 is disordered; that stretch reads SMKHRMDQLEAEEAKLDKEKKKRK. Residues 798-818 are compositionally biased toward basic and acidic residues; that stretch reads HRMDQLEAEEAKLDKEKKKRK.

Belongs to the AAA ATPase family.

The polypeptide is IQ and AAA domain-containing protein 1-like (IQCA1L) (Homo sapiens (Human)).